The chain runs to 498 residues: ADP,ATP carrier protein 1 (498 aa).

Residues 1-33 (MNNPKNDNYLSELSKVIWPIERYENKKFLPMAF) are Cytoplasmic-facing. The helical transmembrane segment at 34 to 54 (MMFCILLNYSTLRSIKDGFVV) threads the bilayer. Cys37 and Cys85 are disulfide-bonded. Topologically, residues 55–67 (TDIGAEAISFLKT) are extracellular. Residues 68–88 (YIVLPSAVIAMVIYVKLCDIL) traverse the membrane as a helical segment. Topologically, residues 89–92 (KQEN) are cytoplasmic. The chain crosses the membrane as a helical span at residues 93-113 (VFYVITSFFLGYFALFAFVLY). Over 114-147 (PYPDLVHPDPETIESWSVAYPNVKWFIRIVGKWS) the chain is Extracellular. Residues 148–168 (FASFYTMAELWGTMMLSLLFW) form a helical membrane-spanning segment. Topologically, residues 169-184 (QFANQITKTDEAKRFY) are cytoplasmic. Residues 185-205 (SMFGLLANLALPVTSVIIGYC) form a helical membrane-spanning segment. At 206 to 218 (LHEKTQIVAEHLK) the chain is on the extracellular side. The helical transmembrane segment at 219-239 (FVPLFVIMITSSFLVILTYRW) threads the bilayer. At 240–279 (MNKNVLTDPRLYDPALVKEKKAKAKMSLIDSFKMIFTSKY) the chain is on the cytoplasmic side. Residues 280–300 (VGYIALLLIAYGVSVNLVEGV) form a helical membrane-spanning segment. Topologically, residues 301–320 (WKSKVKELYPTKEAYTIYMG) are extracellular. Residues 321–341 (KFQFYQGWVAIAFMLIGSNIL) traverse the membrane as a helical segment. Residues 342–348 (RKVSWLT) lie on the Cytoplasmic side of the membrane. Residues 349 to 369 (AAMITPLMMLITGAAFFAFIF) traverse the membrane as a helical segment. The Extracellular segment spans residues 370-379 (FDSVIAMHLT). A helical membrane pass occupies residues 380-400 (GILASGPLALAVMIGMIQNVL). Residues 401–438 (SKGVKYSLFDATKNMAYIPLDKDLRVKGQAAVEVIGGR) are Cytoplasmic-facing. 436–442 (GGRFGKS) is an ATP binding site. A helical membrane pass occupies residues 439–459 (FGKSGGAIIQSTFFILFPAFG). Residues 460-465 (FVEATP) lie on the Extracellular side of the membrane. Residues 466 to 486 (YFASIFFVIVILWIYAVKGLN) traverse the membrane as a helical segment. The Cytoplasmic portion of the chain corresponds to 487–498 (KEYKVLVNKTEK).

The protein belongs to the ADP/ATP translocase tlc family.

The protein resides in the cell membrane. Provides the rickettsial cell with host ATP in exchange for rickettsial ADP. This is an obligate exchange system. This energy acquiring activity is an important component of rickettsial parasitism. This chain is ADP,ATP carrier protein 1 (tlcA), found in Rickettsia conorii (strain ATCC VR-613 / Malish 7).